The chain runs to 311 residues: Probable cysteine synthase (311 aa).

Lys45 bears the N6-(pyridoxal phosphate)lysine mark. Residues Asn75, 182 to 186 (GTGGT), and Ser270 contribute to the pyridoxal 5'-phosphate site.

The protein belongs to the cysteine synthase/cystathionine beta-synthase family. Requires pyridoxal 5'-phosphate as cofactor.

It catalyses the reaction O-acetyl-L-serine + hydrogen sulfide = L-cysteine + acetate. It participates in amino-acid biosynthesis; L-cysteine biosynthesis; L-cysteine from L-serine: step 2/2. The chain is Probable cysteine synthase (ytkP) from Bacillus subtilis (strain 168).